A 284-amino-acid chain; its full sequence is Nucleotide-binding protein Sbal195_0713 (284 aa).

8-15 (GRSGSGKS) serves as a coordination point for ATP. GTP is bound at residue 56–59 (DVRN).

The protein belongs to the RapZ-like family.

Displays ATPase and GTPase activities. The sequence is that of Nucleotide-binding protein Sbal195_0713 from Shewanella baltica (strain OS195).